A 701-amino-acid chain; its full sequence is Peptide transporter 3 (701 aa).

The next 9 helical transmembrane spans lie at 29–49, 55–75, 91–111, 119–139, 154–174, 188–208, 269–289, 318–338, and 351–371; these read FSFY…HEFS, FIYH…SIMA, IYVV…SYPI, GLFV…AFAA, FSFF…ITPI, FPLA…LFLM, GLLN…LFDQ, INPV…YPAL, and AVGG…QLKV. 2 N-linked (GlcNAc...) asparagine glycosylation sites follow: N391 and N432. Transmembrane regions (helical) follow at residues 575-595, 611-631, and 641-661; these read ILWS…LSVT, VLTA…MMIS, and LEFF…ILLA.

This sequence belongs to the major facilitator superfamily. Proton-dependent oligopeptide transporter (POT/PTR) (TC 2.A.17) family. In terms of tissue distribution, expressed in the AVA interneuron.

It is found in the membrane. In terms of biological role, neuron-specific, H(+)-coupled oligopeptide transporter with broad specificity towards di- and tripeptides in a Na(+) and Cl(-)-independent manner. Shows H(+) channel activity in the absence of peptide substrates. The polypeptide is Peptide transporter 3 (pept-3) (Caenorhabditis elegans).